The sequence spans 320 residues: Acetaldehyde dehydrogenase 2 (320 aa).

C129 functions as the Acyl-thioester intermediate in the catalytic mechanism. Residues S160–N168 and N287 contribute to the NAD(+) site.

The protein belongs to the acetaldehyde dehydrogenase family.

It carries out the reaction acetaldehyde + NAD(+) + CoA = acetyl-CoA + NADH + H(+). This Burkholderia cenocepacia (strain ATCC BAA-245 / DSM 16553 / LMG 16656 / NCTC 13227 / J2315 / CF5610) (Burkholderia cepacia (strain J2315)) protein is Acetaldehyde dehydrogenase 2.